Here is a 327-residue protein sequence, read N- to C-terminus: Gamma-gliadin (327 aa).

The first 19 residues, 1 to 19 (MKTLLILTILAMAITIGTA), serve as a signal peptide directing secretion. Residues 42 to 81 (QPLSQQPQQTFPQPQQTFPHQPQQQVPQPQQPQQPFLQPQ) show a composition bias toward low complexity. The tract at residues 42–169 (QPLSQQPQQT…QPQQSFPQQQ (128 aa)) is disordered. 3 stretches are compositionally biased toward pro residues: residues 82-91 (QPFPQQPQQP), 100-109 (QPFPQQPQQP), and 118-127 (QPFPQQPQQP). The span at 128–169 (FPQTQQPQQPFPQLQQPQQPFPQPQQQLPQPQQPQQSFPQQQ) shows a compositional bias: low complexity.

The protein belongs to the gliadin/glutenin family.

Functionally, gliadin is the major seed storage protein in wheat. The polypeptide is Gamma-gliadin (Triticum aestivum (Wheat)).